The following is a 306-amino-acid chain: uncharacterized protein (306 aa).

Tyrosine 51 serves as the catalytic Proton donor. NADP(+) is bound at residue 197 to 207 (GPVAKGLLTEK).

Belongs to the aldo/keto reductase family. Aldo/keto reductase 2 subfamily.

This is an uncharacterized protein from Bacillus subtilis (strain 168).